Here is a 102-residue protein sequence, read N- to C-terminus: Probable endoribonuclease MazF2 (102 aa).

Belongs to the PemK/MazF family. Forms a complex with cognate antitoxin MazE2.

Its function is as follows. Toxic component of a type II toxin-antitoxin (TA) system. Acts as an endoribonuclease. Neutralized by coexpression with cognate antitoxin MazE2. The chain is Probable endoribonuclease MazF2 (mazF2) from Mycobacterium tuberculosis (strain CDC 1551 / Oshkosh).